The sequence spans 2020 residues: Metacaspase-2 (2020 aa).

Composition is skewed to basic and acidic residues over residues Ser51–Gln60 and Asp69–Lys78. 2 disordered regions span residues Ser51–Lys78 and Arg573–Asn614. Over residues Asn576 to Asn614 the composition is skewed to low complexity.

This sequence belongs to the peptidase C14B family.

The protein resides in the cytoplasm. Ca(2+) does not appear to affect catalytic activity. Its function is as follows. Protease that cleaves specifically after arginine or lysine residues. May play a role in parasite growth and/or development. The protein is Metacaspase-2 of Plasmodium falciparum (isolate 3D7).